The chain runs to 319 residues: MKVRLGVDMMGGDHDPLVVWEALEEVLLSLDGQPVEFSVFATPDVHQQLTHSPLSRSVQMIASESFVSMEDSVLAAVRKKRSSMALGLDSLQRGELDGFISAGNTAALVTLARAKIPMIPAVPRPALLVSVPTLSGFAVILDVGATVAVNPEEMVGFARMGLAYRQSLSSSDQSFTLGLLNIGSEERKGTDSHKHTFRMLRDVFGSAFLGNVESGDVFSGKVDIVVTDGFTGNVFLKTAEGLFDFLRHILGDHLEKTIKTRFDYTIYPGSIISGLSRLVIKCHGKSRETALFGGISGAVDLARSNVCGRIAAKFGLEEA.

The protein belongs to the PlsX family. Homodimer. Probably interacts with PlsY.

It localises to the cytoplasm. It carries out the reaction a fatty acyl-[ACP] + phosphate = an acyl phosphate + holo-[ACP]. Its pathway is lipid metabolism; phospholipid metabolism. In terms of biological role, catalyzes the reversible formation of acyl-phosphate (acyl-PO(4)) from acyl-[acyl-carrier-protein] (acyl-ACP). This enzyme utilizes acyl-ACP as fatty acyl donor, but not acyl-CoA. This is Phosphate acyltransferase from Chlamydia muridarum (strain MoPn / Nigg).